A 139-amino-acid chain; its full sequence is Cytochrome c-551 (139 aa).

The signal sequence occupies residues 1 to 20; that stretch reads MTRTLAVVLAMTFSAAPVFA. Heme c-binding residues include cysteine 34, cysteine 37, histidine 38, and methionine 116.

Belongs to the cytochrome c family. Post-translationally, binds 1 heme c group covalently per subunit.

The polypeptide is Cytochrome c-551 (Roseobacter denitrificans (strain ATCC 33942 / OCh 114) (Erythrobacter sp. (strain OCh 114))).